The primary structure comprises 445 residues: Phosphoglucosamine mutase (445 aa).

Ser102 functions as the Phosphoserine intermediate in the catalytic mechanism. Residues Ser102, Asp241, Asp243, and Asp245 each coordinate Mg(2+). Ser102 carries the post-translational modification Phosphoserine.

This sequence belongs to the phosphohexose mutase family. The cofactor is Mg(2+). Post-translationally, activated by phosphorylation.

It carries out the reaction alpha-D-glucosamine 1-phosphate = D-glucosamine 6-phosphate. Functionally, catalyzes the conversion of glucosamine-6-phosphate to glucosamine-1-phosphate. The sequence is that of Phosphoglucosamine mutase from Shigella dysenteriae serotype 1 (strain Sd197).